Consider the following 402-residue polypeptide: Zinc finger protein CONSTANS-LIKE 14 (402 aa).

Zn(2+)-binding residues include cysteine 12, cysteine 15, cysteine 35, histidine 40, cysteine 55, cysteine 58, cysteine 78, and histidine 83. A B box-type 1; atypical zinc finger spans residues 12-54 (CEFCGERTAVLFCRADTAKLCLPCDQHVHSANLLSRKHVRSQI). The B box-type 2; atypical zinc finger occupies 55-97 (CDNCSKEPVSVRCFTDNLVLCQECDWDVHGSCSSSATHERSAV). Residues 287 to 322 (SYQQEDSVHSTSTKGQETSKSNNIPAAIHSHKSSND) form a disordered region. Polar residues predominate over residues 295–310 (HSTSTKGQETSKSNNI). The stretch at 345–372 (VTNADLEQMAQNRDNAMQRYKEKKKTRR) forms a coiled coil. The CCT domain maps to 357-399 (RDNAMQRYKEKKKTRRYDKTIRYETRKARAETRLRVKGRFVKA).

The protein belongs to the CONSTANS family.

It is found in the nucleus. This chain is Zinc finger protein CONSTANS-LIKE 14 (COL14), found in Arabidopsis thaliana (Mouse-ear cress).